A 48-amino-acid polypeptide reads, in one-letter code: uncharacterized protein (48 aa).

It belongs to the ELIP/psbS family.

The protein resides in the plastid. It is found in the chloroplast. Possible role in chlorophyll and/or carotenoid binding. This is an uncharacterized protein from Porphyra purpurea (Red seaweed).